We begin with the raw amino-acid sequence, 444 residues long: 1,4-beta-D-glucan glucohydrolase (444 aa).

Residue glutamate 164 is the Proton donor of the active site. The active-site Nucleophile is glutamate 349.

This sequence belongs to the glycosyl hydrolase 1 family. As to quaternary structure, monomer.

It catalyses the reaction Hydrolysis of (1-&gt;4)-linkages in (1-&gt;4)-beta-D-glucans, to remove successive glucose units.. The enzyme catalyses Hydrolysis of terminal, non-reducing beta-D-glucosyl residues with release of beta-D-glucose.. Its pathway is glycan metabolism; cellulose degradation. The protein operates within glycan metabolism; beta-D-glucan degradation. With respect to regulation, activated by glucose up to 200 mM when p-nitrophenyl-beta-glucoside is used as the substrate. This activation by end product concentrations may be due to a transglycosylation activity of the enzyme. Its function is as follows. Broad substrate specificity glycosidase. Releases glucose from soluble glucooligomers, with a preference for longer oligomers; acts more readily on cellotetraose than on cellobiose. Displays similar activities towards the disaccharides lactose and cellobiose. Is also able to hydrolyze various aryl-beta-glycosides in vitro. The chain is 1,4-beta-D-glucan glucohydrolase from Thermotoga neapolitana (strain ATCC 49049 / DSM 4359 / NBRC 107923 / NS-E).